We begin with the raw amino-acid sequence, 228 residues long: Probable septum site-determining protein MinC (228 aa).

The protein belongs to the MinC family. Interacts with MinD and FtsZ.

Cell division inhibitor that blocks the formation of polar Z ring septums. Rapidly oscillates between the poles of the cell to destabilize FtsZ filaments that have formed before they mature into polar Z rings. Prevents FtsZ polymerization. This is Probable septum site-determining protein MinC from Bacillus cereus (strain B4264).